Here is a 450-residue protein sequence, read N- to C-terminus: Proline--tRNA ligase (450 aa).

It belongs to the class-II aminoacyl-tRNA synthetase family. ProS type 2 subfamily. In terms of assembly, homodimer.

Its subcellular location is the cytoplasm. It catalyses the reaction tRNA(Pro) + L-proline + ATP = L-prolyl-tRNA(Pro) + AMP + diphosphate. In terms of biological role, catalyzes the attachment of proline to tRNA(Pro) in a two-step reaction: proline is first activated by ATP to form Pro-AMP and then transferred to the acceptor end of tRNA(Pro). The sequence is that of Proline--tRNA ligase from Paracoccus denitrificans (strain Pd 1222).